Consider the following 93-residue polypeptide: Large ribosomal subunit protein bL27 (93 aa).

Positions 1 to 10 (MLLKLQIQLF) are excised as a propeptide.

This sequence belongs to the bacterial ribosomal protein bL27 family. Post-translationally, the N-terminus is cleaved by ribosomal processing cysteine protease Prp.

In Phytoplasma australiense, this protein is Large ribosomal subunit protein bL27.